A 159-amino-acid chain; its full sequence is SsrA-binding protein (159 aa).

The protein belongs to the SmpB family.

It is found in the cytoplasm. Required for rescue of stalled ribosomes mediated by trans-translation. Binds to transfer-messenger RNA (tmRNA), required for stable association of tmRNA with ribosomes. tmRNA and SmpB together mimic tRNA shape, replacing the anticodon stem-loop with SmpB. tmRNA is encoded by the ssrA gene; the 2 termini fold to resemble tRNA(Ala) and it encodes a 'tag peptide', a short internal open reading frame. During trans-translation Ala-aminoacylated tmRNA acts like a tRNA, entering the A-site of stalled ribosomes, displacing the stalled mRNA. The ribosome then switches to translate the ORF on the tmRNA; the nascent peptide is terminated with the 'tag peptide' encoded by the tmRNA and targeted for degradation. The ribosome is freed to recommence translation, which seems to be the essential function of trans-translation. The chain is SsrA-binding protein from Frankia casuarinae (strain DSM 45818 / CECT 9043 / HFP020203 / CcI3).